We begin with the raw amino-acid sequence, 240 residues long: 7-cyano-7-deazaguanine synthase (240 aa).

An ATP-binding site is contributed by 18-28; sequence FSGGQDSTTCL. Zn(2+)-binding residues include C197, C206, C209, and C212.

The protein belongs to the QueC family. It depends on Zn(2+) as a cofactor.

The enzyme catalyses 7-carboxy-7-deazaguanine + NH4(+) + ATP = 7-cyano-7-deazaguanine + ADP + phosphate + H2O + H(+). It participates in purine metabolism; 7-cyano-7-deazaguanine biosynthesis. In terms of biological role, catalyzes the ATP-dependent conversion of 7-carboxy-7-deazaguanine (CDG) to 7-cyano-7-deazaguanine (preQ(0)). In Shewanella putrefaciens (strain CN-32 / ATCC BAA-453), this protein is 7-cyano-7-deazaguanine synthase.